We begin with the raw amino-acid sequence, 132 residues long: Nucleoid-associated protein EspR (132 aa).

The segment at residues 38-50 (ITMSAPYLSQLRS) is a DNA-binding region (H-T-H motif).

Homodimer. Binds DNA as a dimer of dimers.

The protein resides in the cytoplasm. Its subcellular location is the nucleoid. Virulence regulator that has both architectural and regulatory roles. Impacts cell wall functions and pathogenesis through regulation of multiple genes. The sequence is that of Nucleoid-associated protein EspR from Mycobacterium tuberculosis (strain CDC 1551 / Oshkosh).